The sequence spans 523 residues: (R)-citramalate synthase (523 aa).

Residues 6–272 (VEVLDTTLRD…KGNESLKKLK (267 aa)) form the Pyruvate carboxyltransferase domain.

This sequence belongs to the alpha-IPM synthase/homocitrate synthase family.

The enzyme catalyses pyruvate + acetyl-CoA + H2O = (3R)-citramalate + CoA + H(+). The protein operates within amino-acid biosynthesis; L-isoleucine biosynthesis; 2-oxobutanoate from pyruvate: step 1/3. With respect to regulation, inhibited by isoleucine. In terms of biological role, catalyzes the condensation of pyruvate and acetyl-coenzyme A to form (R)-citramalate. Makes part of a pathway for isoleucine biosynthesis, i.e. the citramalate-dependent pathway. Also displays a low alpha-isopropylmalate synthase activity, using 2-oxoisovalerate as substrate, but is unable to use 2-oxoglutarate. This Sulfolobus acidocaldarius (strain ATCC 33909 / DSM 639 / JCM 8929 / NBRC 15157 / NCIMB 11770) protein is (R)-citramalate synthase.